The following is a 249-amino-acid chain: Sodium channel modifier 1 (249 aa).

Positions 4 to 20 (KREGDDQSQLNILKKRR) match the Bipartite nuclear localization signal motif. The segment at 42 to 74 (YSCLVCSHRPVFDTVDMLVVHRKGKRHLEGMKW) adopts a Matrin-type zinc-finger fold. Residues 94–103 (YVKAEDDRQE) are compositionally biased toward basic and acidic residues. 3 disordered regions span residues 94-116 (YVKA…QTRK), 128-199 (YSSC…PLTE), and 228-249 (ENVE…SESS). A compositionally biased stretch (polar residues) spans 104–115 (PSSSAPLLTQTR). The segment covering 134 to 149 (KASERSESSSKEHRND) has biased composition (basic and acidic residues). Positions 150 to 170 (LANSHLSMRTESNDSRTTVHQ) are enriched in polar residues. Over residues 230 to 239 (VEFDSDEEEP) the composition is skewed to acidic residues.

As to quaternary structure, component of the minor spliceosome, which splices U12-type introns.

The protein resides in the nucleus. It is found in the nucleoplasm. It localises to the nucleus speckle. Its function is as follows. As a component of the minor spliceosome, involved in the splicing of U12-type introns in pre-mRNAs. This chain is Sodium channel modifier 1 (scnm1), found in Danio rerio (Zebrafish).